We begin with the raw amino-acid sequence, 636 residues long: MHLSEITHPNQLHGLSVAQLEQIGHQIREKHLQTVAATGGHLGPGLGVVELTLALYQTLDLDRDKVVWDVGHQAYPHKLLTGRYHNFHTLRQKDGIAGYLKRTENRFDHFGAGHASTSISAALGMALARDAQGEDYRCVAVIGDGSLTGGMALEAINHAGHLPKTRLLVVLNDNDMSISPNVGALSRYLNKIRVSEPMQLLTDGLTQGMQQIPFVGGAITQGFEPVKEGMKRLSYSKIGAVFEELGFTYMGPVDGHNLEELIATFREAHKHTGPVLVHVATTKGKGYPYAEEDQVGYHAQNPFDLATGKAKPASKPKPPSYSKVFGQTLTTLAKSDRRIVGITAAMATGTGLDILQKALPKQYIDVGIAEQHAVVLAAGMACDGMRPVVAIYSTFLQRAFDQVIHDVCIQKLPVFFCLDRAGIVGADGPTHQGMYDIAYLRLIPNMVLMAPKDEAELQRMLVTGIEYDGPIAMRFPRGNGIGVPLPEEGWESLPIGKAEQLRQGDDLLMLAYGSMVYPALQTAELLNEHGISATVINARFAKPLDEELIVPLARQIGKVVTFEEGCLPGGFGSAIMESLQAHDLQVPVLPIGVPDLLVEHASPDESKQELGLTPRQMADRILEKFGSRQRIGAASA.

Thiamine diphosphate contacts are provided by residues H72 and 113-115; that span reads GHA. D144 is a binding site for Mg(2+). Residues 145 to 146, N174, Y287, and E370 each bind thiamine diphosphate; that span reads GS. N174 is a binding site for Mg(2+).

The protein belongs to the transketolase family. DXPS subfamily. As to quaternary structure, homodimer. Mg(2+) serves as cofactor. It depends on thiamine diphosphate as a cofactor.

The catalysed reaction is D-glyceraldehyde 3-phosphate + pyruvate + H(+) = 1-deoxy-D-xylulose 5-phosphate + CO2. Its pathway is metabolic intermediate biosynthesis; 1-deoxy-D-xylulose 5-phosphate biosynthesis; 1-deoxy-D-xylulose 5-phosphate from D-glyceraldehyde 3-phosphate and pyruvate: step 1/1. Catalyzes the acyloin condensation reaction between C atoms 2 and 3 of pyruvate and glyceraldehyde 3-phosphate to yield 1-deoxy-D-xylulose-5-phosphate (DXP). The protein is 1-deoxy-D-xylulose-5-phosphate synthase of Synechococcus elongatus (strain ATCC 33912 / PCC 7942 / FACHB-805) (Anacystis nidulans R2).